The following is a 55-amino-acid chain: Protein CADMIUM TOLERANCE 2 (55 aa).

Residues 24 to 40 (GCLYACIFTALCCFCCY) traverse the membrane as a helical segment.

This sequence belongs to the CYSTM1 family. In terms of tissue distribution, expressed only in roots.

It is found in the cell membrane. The protein localises to the secreted. It localises to the cell wall. Confers resistance to heavy metal ions (e.g. cadmium (CdCl(2)) and copper (CuCl(2))) by chelating them at the plasma membrane of root cells, thus stopping their entry and reducing their accumulation. The protein is Protein CADMIUM TOLERANCE 2 of Oryza sativa subsp. japonica (Rice).